The chain runs to 257 residues: Acetylglutamate kinase (257 aa).

Substrate-binding positions include 43 to 44 (GG), arginine 65, and asparagine 157. Residues 180–185 (DISGIL) and 208–210 (IIT) each bind ATP.

This sequence belongs to the acetylglutamate kinase family. ArgB subfamily. In terms of assembly, homodimer.

Its subcellular location is the cytoplasm. It catalyses the reaction N-acetyl-L-glutamate + ATP = N-acetyl-L-glutamyl 5-phosphate + ADP. It participates in amino-acid biosynthesis; L-arginine biosynthesis; N(2)-acetyl-L-ornithine from L-glutamate: step 2/4. Its function is as follows. Catalyzes the ATP-dependent phosphorylation of N-acetyl-L-glutamate. In Sodalis glossinidius (strain morsitans), this protein is Acetylglutamate kinase.